The sequence spans 358 residues: Histidinol-phosphate aminotransferase (358 aa).

K218 is subject to N6-(pyridoxal phosphate)lysine.

It belongs to the class-II pyridoxal-phosphate-dependent aminotransferase family. Histidinol-phosphate aminotransferase subfamily. As to quaternary structure, homodimer. It depends on pyridoxal 5'-phosphate as a cofactor.

The catalysed reaction is L-histidinol phosphate + 2-oxoglutarate = 3-(imidazol-4-yl)-2-oxopropyl phosphate + L-glutamate. The protein operates within amino-acid biosynthesis; L-histidine biosynthesis; L-histidine from 5-phospho-alpha-D-ribose 1-diphosphate: step 7/9. In Dehalococcoides mccartyi (strain ATCC BAA-2100 / JCM 16839 / KCTC 5957 / BAV1), this protein is Histidinol-phosphate aminotransferase.